We begin with the raw amino-acid sequence, 626 residues long: Phosphomethylpyrimidine synthase (626 aa).

Residues asparagine 237, methionine 266, tyrosine 295, histidine 331, serine 351–glycine 353, aspartate 392–arginine 395, and glutamate 431 contribute to the substrate site. A Zn(2+)-binding site is contributed by histidine 435. A substrate-binding site is contributed by tyrosine 458. Position 499 (histidine 499) interacts with Zn(2+). Residues cysteine 579, cysteine 582, and cysteine 587 each coordinate [4Fe-4S] cluster.

This sequence belongs to the ThiC family. As to quaternary structure, homodimer. It depends on [4Fe-4S] cluster as a cofactor.

The enzyme catalyses 5-amino-1-(5-phospho-beta-D-ribosyl)imidazole + S-adenosyl-L-methionine = 4-amino-2-methyl-5-(phosphooxymethyl)pyrimidine + CO + 5'-deoxyadenosine + formate + L-methionine + 3 H(+). It functions in the pathway cofactor biosynthesis; thiamine diphosphate biosynthesis. Its function is as follows. Catalyzes the synthesis of the hydroxymethylpyrimidine phosphate (HMP-P) moiety of thiamine from aminoimidazole ribotide (AIR) in a radical S-adenosyl-L-methionine (SAM)-dependent reaction. The polypeptide is Phosphomethylpyrimidine synthase (Cupriavidus necator (strain ATCC 17699 / DSM 428 / KCTC 22496 / NCIMB 10442 / H16 / Stanier 337) (Ralstonia eutropha)).